The chain runs to 869 residues: Aconitate hydratase A (869 aa).

[4Fe-4S] cluster contacts are provided by Cys-411, Cys-477, and Cys-480.

Belongs to the aconitase/IPM isomerase family. Monomer. Requires [4Fe-4S] cluster as cofactor.

It catalyses the reaction citrate = D-threo-isocitrate. The enzyme catalyses (2S,3R)-3-hydroxybutane-1,2,3-tricarboxylate = 2-methyl-cis-aconitate + H2O. The protein operates within carbohydrate metabolism; tricarboxylic acid cycle; isocitrate from oxaloacetate: step 2/2. Its pathway is organic acid metabolism; propanoate degradation. In terms of biological role, involved in the catabolism of short chain fatty acids (SCFA) via the tricarboxylic acid (TCA)(acetyl degradation route) and the 2-methylcitrate cycle I (propionate degradation route). Catalyzes the reversible isomerization of citrate to isocitrate via cis-aconitate. Could catalyze the hydration of 2-methyl-cis-aconitate to yield (2S,3R)-2-methylisocitrate. The apo form of AcnA functions as a RNA-binding regulatory protein. This chain is Aconitate hydratase A, found in Cupriavidus necator (Alcaligenes eutrophus).